Here is a 253-residue protein sequence, read N- to C-terminus: HTH-type transcriptional regulator YdeO (253 aa).

An HTH araC/xylS-type domain is found at 137–233 (GKVRNIVNMK…GNSPKRVSKE (97 aa)). DNA-binding regions (H-T-H motif) lie at residues 154–175 (KDICDCLYISESLLKKKLKQEQ) and 200–223 (VNKIAEQCGYASTSYFIYAFRKHF).

Functionally, induces the expression of gadE and mdtEF. Could also regulate the expression of other genes involved in acid resistance. This Escherichia coli O6:H1 (strain CFT073 / ATCC 700928 / UPEC) protein is HTH-type transcriptional regulator YdeO (ydeO).